An 875-amino-acid polypeptide reads, in one-letter code: MEKLHQCYWKSGEPQSDDIEASRMKRAAAKHLIERYYHQLTEGCGNEACTNEFCASCPTFLRMDNNAAAIKALELYKINAKLCDPHPSKKGASSAYLENSKGAPNNSCSEIKMNKKGARIDFKDVTYLTEEKVYEILELCREREDYSPLIRVIGRVFSSAEALVQSFRKVKQHTKEELKSLQAKDEDKDEDEKEKAACSAAAMEEDSEASSSRIGDSSQGDNNLQKLGPDDVSVDIDAIRRVYTRLLSNEKIETAFLNALVYLSPNVECDLTYHNVYSRDPNYLNLFIIVMENRNLHSPEYLEMALPLFCKAMSKLPLAAQGKLIRLWSKYNADQIRRMMETFQQLITYKVISNEFNSRNLVNDDDAIVAASKCLKMVYYANVVGGEVDTNHNEEDDEEPIPESSELTLQELLGEERRNKKGPRVDPLETELGVKTLDCRKPLIPFEEFINEPLNEVLEMDKDYTFFKVETENKFSFMTCPFILNAVTKNLGLYYDNRIRMYSERRITVLYSLVQGQQLNPYLRLKVRRDHIIDDALVRLEMIAMENPADLKKQLYVEFEGEQGVDEGGVSKEFFQLVVEEIFNPDIGMFTYDESTKLFWFNPSSFETEGQFTLIGIVLGLAIYNNCILDVHFPMVVYRKLMGKKGTFRDLGDSHPVLYQSLKDLLEYEGNVEDDMMITFQISQTDLFGNPMMYDLKENGDKIPITNENRKEFVNLYSDYILNKSVEKQFKAFRRGFHMVTNESPLKYLFRPEEIELLICGSRNLDFQALEETTEYDGGYTRDSVLIREFWEIVHSFTDEQKRLFLQFTTGTDRAPVGGLGKLKMIIAKNGPDTERLPTSHTCFNVLLLPEYSSKEKLKERLLKAITYAKGFGML.

A C4-type; atypical zinc finger spans residues 44-83 (CGNEACTNEFCASCPTFLRMDNNAAAIKALELYKINAKLC). Over residues 175 to 186 (KEELKSLQAKDE) the composition is skewed to basic and acidic residues. The disordered stretch occupies residues 175–226 (KEELKSLQAKDEDKDEDEKEKAACSAAAMEEDSEASSSRIGDSSQGDNNLQK). A compositionally biased stretch (polar residues) spans 213-225 (RIGDSSQGDNNLQ). S218 is modified (phosphoserine). An E6-binding region spans residues 401–418 (IPESSELTLQELLGEERR). An interaction with HCV core protein region spans residues 418-517 (RNKKGPRVDP…TVLYSLVQGQ (100 aa)). Phosphotyrosine; by ABL1 is present on Y659. The region spanning 776–875 (YDGGYTRDSV…ITYAKGFGML (100 aa)) is the HECT domain. C843 functions as the Glycyl thioester intermediate in the catalytic mechanism.

As to quaternary structure, the active form is probably a homotrimer. Binds UBQLN1 and UBQLN2. Interacts with the 26S proteasome. Interacts with BPY2. Interacts with HIF1AN, MAPK6 and NEURL4; interaction with MAPK6 may be mediated by NEURL4. Interacts with the proteasomal subunit PSMD4. Interacts with ESR1 and WBP2. Interacts with BMAL1. Interacts with ARC. In terms of assembly, (Microbial infection) Interacts with HCV core protein and targets it to degradation. (Microbial infection) Interacts with the E6 protein of the cancer-associated human papillomavirus types 16 and 18. The E6/E6-AP complex binds to and targets the p53/TP53 tumor-suppressor protein for ubiquitin-mediated proteolysis. Post-translationally, phosphorylation at Tyr-659 by ABL1 impairs E3 ligase activity and protects p53/TP53 from degradation in (HPV)-infected cells.

It localises to the cytoplasm. Its subcellular location is the nucleus. It catalyses the reaction S-ubiquitinyl-[E2 ubiquitin-conjugating enzyme]-L-cysteine + [acceptor protein]-L-lysine = [E2 ubiquitin-conjugating enzyme]-L-cysteine + N(6)-ubiquitinyl-[acceptor protein]-L-lysine.. The protein operates within protein modification; protein ubiquitination. In terms of biological role, E3 ubiquitin-protein ligase which accepts ubiquitin from an E2 ubiquitin-conjugating enzyme in the form of a thioester and transfers it to its substrates. Several substrates have been identified including the BMAL1, ARC, LAMTOR1, RAD23A and RAD23B, MCM7 (which is involved in DNA replication), annexin A1, the PML tumor suppressor, and the cell cycle regulator CDKN1B. Additionally, may function as a cellular quality control ubiquitin ligase by helping the degradation of the cytoplasmic misfolded proteins. Finally, UBE3A also promotes its own degradation in vivo. Plays an important role in the regulation of the circadian clock: involved in the ubiquitination of the core clock component BMAL1, leading to its proteasomal degradation. Acts as transcriptional coactivator of progesterone receptor PGR upon progesterone hormone activation. Acts as a regulator of synaptic development by mediating ubiquitination and degradation of ARC. Required for synaptic remodeling in neurons by mediating ubiquitination and degradation of LAMTOR1, thereby limiting mTORC1 signaling and activity-dependent synaptic remodeling. Synergizes with WBP2 in enhancing PGR activity. Its function is as follows. (Microbial infection) Catalyzes the high-risk human papilloma virus E6-mediated ubiquitination of p53/TP53, contributing to the neoplastic progression of cells infected by these viruses. The sequence is that of Ubiquitin-protein ligase E3A from Homo sapiens (Human).